A 244-amino-acid chain; its full sequence is Small ribosomal subunit protein uS2 (244 aa).

It belongs to the universal ribosomal protein uS2 family.

This Halalkalibacterium halodurans (strain ATCC BAA-125 / DSM 18197 / FERM 7344 / JCM 9153 / C-125) (Bacillus halodurans) protein is Small ribosomal subunit protein uS2.